The following is a 328-amino-acid chain: Fe(3+) ions import ATP-binding protein FbpC 1 (328 aa).

Residues 7–237 form the ABC transporter domain; sequence LVLKNITKAF…PNSLFLANFM (231 aa). Residue 39–46 participates in ATP binding; it reads GPSGCGKT.

The protein belongs to the ABC transporter superfamily. Fe(3+) ion importer (TC 3.A.1.10) family. In terms of assembly, the complex is composed of two ATP-binding proteins (FbpC), two transmembrane proteins (FbpB) and a solute-binding protein (FbpA).

It is found in the cell inner membrane. It carries out the reaction Fe(3+)(out) + ATP + H2O = Fe(3+)(in) + ADP + phosphate + H(+). Part of the ABC transporter complex FbpABC involved in Fe(3+) ions import. Responsible for energy coupling to the transport system. This Haemophilus influenzae (strain ATCC 51907 / DSM 11121 / KW20 / Rd) protein is Fe(3+) ions import ATP-binding protein FbpC 1.